The following is a 229-amino-acid chain: UPF0758 protein Mbar_A2303 (229 aa).

One can recognise an MPN domain in the interval 106-228; sequence KVCSPKDVYT…YVSLKDEGFV (123 aa). His177, His179, and Asp190 together coordinate Zn(2+). Residues 177-190 carry the JAMM motif motif; that stretch reads HNHPSGDPSPSRED.

The protein belongs to the UPF0758 family.

The sequence is that of UPF0758 protein Mbar_A2303 from Methanosarcina barkeri (strain Fusaro / DSM 804).